The following is a 252-amino-acid chain: Gamma carbonic anhydrase-like 1, mitochondrial (252 aa).

A mitochondrion-targeting transit peptide spans 1–29 (MATSIARLSRRGVTSNLIRRCFAAEAALA). Residues 99 to 101 (RGD) and 114 to 115 (QE) contribute to the substrate site. A Zn(2+)-binding site is contributed by His120. Residues Arg148, Gln160, and Tyr227 each coordinate substrate.

It belongs to the gamma-class carbonic anhydrase family. Component of the mitochondrial oxidoreductase respiratory chain complex I; element of the extra matrix-exposed domain, which is attached to the membrane arm of this complex. Interacts with GAMMACA2.

It localises to the mitochondrion membrane. Involved in complex I assembly in mitochondria and respiration. This Arabidopsis thaliana (Mouse-ear cress) protein is Gamma carbonic anhydrase-like 1, mitochondrial (GAMMACAL1).